The primary structure comprises 21 residues: Putative pancreatic polypeptide 2 (21 aa).

This sequence belongs to the NPY family.

The protein is Putative pancreatic polypeptide 2 (PPY2P) of Homo sapiens (Human).